A 364-amino-acid chain; its full sequence is tRNA 2-selenouridine synthase (364 aa).

The Rhodanese domain occupies 14–137; the sequence is LLADTPLIDV…LRQTAIQATW (124 aa). Cysteine 97 serves as the catalytic S-selanylcysteine intermediate.

This sequence belongs to the SelU family. Monomer.

It catalyses the reaction 5-methylaminomethyl-2-thiouridine(34) in tRNA + selenophosphate + (2E)-geranyl diphosphate + H2O + H(+) = 5-methylaminomethyl-2-selenouridine(34) in tRNA + (2E)-thiogeraniol + phosphate + diphosphate. The catalysed reaction is 5-methylaminomethyl-2-thiouridine(34) in tRNA + (2E)-geranyl diphosphate = 5-methylaminomethyl-S-(2E)-geranyl-thiouridine(34) in tRNA + diphosphate. The enzyme catalyses 5-methylaminomethyl-S-(2E)-geranyl-thiouridine(34) in tRNA + selenophosphate + H(+) = 5-methylaminomethyl-2-(Se-phospho)selenouridine(34) in tRNA + (2E)-thiogeraniol. It carries out the reaction 5-methylaminomethyl-2-(Se-phospho)selenouridine(34) in tRNA + H2O = 5-methylaminomethyl-2-selenouridine(34) in tRNA + phosphate. Involved in the post-transcriptional modification of the uridine at the wobble position (U34) of tRNA(Lys), tRNA(Glu) and tRNA(Gln). Catalyzes the conversion of 2-thiouridine (S2U-RNA) to 2-selenouridine (Se2U-RNA). Acts in a two-step process involving geranylation of 2-thiouridine (S2U) to S-geranyl-2-thiouridine (geS2U) and subsequent selenation of the latter derivative to 2-selenouridine (Se2U) in the tRNA chain. In Salmonella heidelberg (strain SL476), this protein is tRNA 2-selenouridine synthase.